A 99-amino-acid polypeptide reads, in one-letter code: MNVTAYVVLSGILFTIGCVGVLIRRNAIVVFMCVELMLNASNLALVAFARQHGNLDGQIAAFFVMVVAAAEVVVGLAIIMTIFRTRRSASVDDASLLKY.

3 helical membrane-spanning segments follow: residues V3–I23, I28–F48, and I59–I79.

Belongs to the complex I subunit 4L family. In terms of assembly, NDH-1 is composed of 14 different subunits. Subunits NuoA, H, J, K, L, M, N constitute the membrane sector of the complex.

The protein localises to the cell membrane. It catalyses the reaction a quinone + NADH + 5 H(+)(in) = a quinol + NAD(+) + 4 H(+)(out). Functionally, NDH-1 shuttles electrons from NADH, via FMN and iron-sulfur (Fe-S) centers, to quinones in the respiratory chain. The immediate electron acceptor for the enzyme in this species is believed to be a menaquinone. Couples the redox reaction to proton translocation (for every two electrons transferred, four hydrogen ions are translocated across the cytoplasmic membrane), and thus conserves the redox energy in a proton gradient. This chain is NADH-quinone oxidoreductase subunit K, found in Nocardioides sp. (strain ATCC BAA-499 / JS614).